Reading from the N-terminus, the 347-residue chain is MAQHRTLAHPFQFSLRWLSPLLPGILICAAVSCAAILAERFQVRIAGHAWLGDLVLAILIGTLLRSLVSLPVVASAGIKFSAKTLLEIAVALLGASLSLSILKGAGGLLIGGIALIVALSLVFSYAAGRMLGLPPKLATLIACGNSICGNSAIAAAAPAIGAKPEDVAASIAFTAVLGVVAVLLMPFLPQLLGLDATQYGIFAGLTVYAVPQVLAATAPLGAVAVQTGTIVKLIRVLMLGPVIATLSVIHGQSGKGRLKLQQMVPWFIIGFVLMIMARSFGLIPEALLSPVASLSNILTIMSMAALGLSVDIRSLRHAGGKVIIAASLSLVLLGVLSFGLILLTQAA.

10 helical membrane passes run 15-37, 50-72, 105-127, 140-162, 172-194, 201-223, 233-250, 263-282, 287-309, and 322-344; these read LRWLSPLLPGILICAAVSCAAIL, WLGDLVLAILIGTLLRSLVSLPV, AGGLLIGGIALIVALSLVFSYAA, LIACGNSICGNSAIAAAAPAIGA, AFTAVLGVVAVLLMPFLPQLLGL, IFAGLTVYAVPQVLAATAPLGAV, LIRVLMLGPVIATLSVIH, MVPWFIIGFVLMIMARSFGL, LLSPVASLSNILTIMSMAALGLS, and VIIAASLSLVLLGVLSFGLILLT.

The protein belongs to the UPF0324 family.

The protein localises to the cell membrane. This chain is UPF0324 membrane protein Atu0671, found in Agrobacterium fabrum (strain C58 / ATCC 33970) (Agrobacterium tumefaciens (strain C58)).